A 258-amino-acid chain; its full sequence is Arylamine N-acetyltransferase 1 (258 aa).

The active-site Acyl-thioester intermediate is Cys-59. Ile-97–His-98 is a binding site for substrate. Catalysis depends on residues His-98 and Asp-113. CoA contacts are provided by Tyr-199 and Thr-205.

This sequence belongs to the arylamine N-acetyltransferase family.

It localises to the cytoplasm. The catalysed reaction is an arylamine + acetyl-CoA = an N-acetylarylamine + CoA. Functionally, participates in the detoxification of a plethora of hydrazine and arylamine drugs. In Felis catus (Cat), this protein is Arylamine N-acetyltransferase 1 (NAT1).